Here is a 232-residue protein sequence, read N- to C-terminus: Phosphatidylserine decarboxylase proenzyme (232 aa).

Ser190 acts as the Schiff-base intermediate with substrate; via pyruvic acid in catalysis. Ser190 carries the post-translational modification Pyruvic acid (Ser); by autocatalysis.

This sequence belongs to the phosphatidylserine decarboxylase family. PSD-A subfamily. As to quaternary structure, heterodimer of a large membrane-associated beta subunit and a small pyruvoyl-containing alpha subunit. The cofactor is pyruvate. Is synthesized initially as an inactive proenzyme. Formation of the active enzyme involves a self-maturation process in which the active site pyruvoyl group is generated from an internal serine residue via an autocatalytic post-translational modification. Two non-identical subunits are generated from the proenzyme in this reaction, and the pyruvate is formed at the N-terminus of the alpha chain, which is derived from the carboxyl end of the proenzyme. The post-translation cleavage follows an unusual pathway, termed non-hydrolytic serinolysis, in which the side chain hydroxyl group of the serine supplies its oxygen atom to form the C-terminus of the beta chain, while the remainder of the serine residue undergoes an oxidative deamination to produce ammonia and the pyruvoyl prosthetic group on the alpha chain.

It localises to the cell membrane. It catalyses the reaction a 1,2-diacyl-sn-glycero-3-phospho-L-serine + H(+) = a 1,2-diacyl-sn-glycero-3-phosphoethanolamine + CO2. The protein operates within phospholipid metabolism; phosphatidylethanolamine biosynthesis; phosphatidylethanolamine from CDP-diacylglycerol: step 2/2. Its function is as follows. Catalyzes the formation of phosphatidylethanolamine (PtdEtn) from phosphatidylserine (PtdSer). This is Phosphatidylserine decarboxylase proenzyme from Bartonella henselae (strain ATCC 49882 / DSM 28221 / CCUG 30454 / Houston 1) (Rochalimaea henselae).